Consider the following 208-residue polypeptide: UPF0319 protein VSAL_I2129 (208 aa).

A signal peptide spans 1 to 21 (MKFHSFLAAGLCLLTSLSASA).

Belongs to the UPF0319 family.

The sequence is that of UPF0319 protein VSAL_I2129 from Aliivibrio salmonicida (strain LFI1238) (Vibrio salmonicida (strain LFI1238)).